Here is a 388-residue protein sequence, read N- to C-terminus: Mannitol-1-phosphate 5-dehydrogenase (388 aa).

5-16 (AIQFGGGNIGRG) serves as a coordination point for NAD(+). The active site involves K213.

This sequence belongs to the mannitol dehydrogenase family. In terms of assembly, monomer.

It catalyses the reaction D-mannitol 1-phosphate + NAD(+) = beta-D-fructose 6-phosphate + NADH + H(+). Catalyzes the NAD(H)-dependent interconversion of D-fructose 6-phosphate and D-mannitol 1-phosphate in the mannitol metabolic pathway. The chain is Mannitol-1-phosphate 5-dehydrogenase (mpdA) from Aspergillus clavatus (strain ATCC 1007 / CBS 513.65 / DSM 816 / NCTC 3887 / NRRL 1 / QM 1276 / 107).